The primary structure comprises 116 residues: uncharacterized protein (116 aa).

A signal peptide spans 1–15 (MKKYFLILASFMLVA).

This is an uncharacterized protein from Haemophilus influenzae (strain ATCC 51907 / DSM 11121 / KW20 / Rd).